A 164-amino-acid chain; its full sequence is Glutaredoxin-2, mitochondrial (164 aa).

Residues 1–19 (MIWRRAALAGTRLVWSRSG) constitute a mitochondrion transit peptide. Ser-20 is modified (phosphoserine). The Glutaredoxin domain maps to 57–157 (VNQIQETISD…PLVHQCYLKK (101 aa)). Cys-68 contributes to the [2Fe-2S] cluster binding site. Lys-74 provides a ligand contact to glutathione. Cys-77 carries the S-glutathionyl cysteine; alternate modification. A disulfide bridge links Cys-77 with Cys-80. Residues Gln-109 and Val-121 each coordinate glutathione. Residue Cys-153 coordinates [2Fe-2S] cluster.

This sequence belongs to the glutaredoxin family. Monomer; active form. Homodimer; inactive form. The homodimer is probably linked by 1 2Fe-2S cluster. Widely expressed. Expressed in brain, heart, skeletal muscle, colon, thymus, spleen, kidney, liver, small intestine, placenta and lung. Not expressed in peripheral blood leukocytes.

The protein resides in the mitochondrion. It localises to the nucleus. Its activity is regulated as follows. The 2Fe-2S present in the homodimer leads to inactivation of the enzyme. The 2Fe-2S may serve as a redox sensor: the presence of one-electron oxidants or reductants leading to the loss of the 2Fe-2S cluster, subsequent monomerization and activation of the enzyme. Unlike other glutaredoxins, it is not inhibited by oxidation of structural Cys residues. Glutathione-dependent oxidoreductase that facilitates the maintenance of mitochondrial redox homeostasis upon induction of apoptosis by oxidative stress. Involved in response to hydrogen peroxide and regulation of apoptosis caused by oxidative stress. Acts as a very efficient catalyst of monothiol reactions because of its high affinity for protein glutathione-mixed disulfides. Can receive electrons not only from glutathione (GSH), but also from thioredoxin reductase supporting both monothiol and dithiol reactions. Efficiently catalyzes both glutathionylation and deglutathionylation of mitochondrial complex I, which in turn regulates the superoxide production by the complex. Overexpression decreases the susceptibility to apoptosis and prevents loss of cardiolipin and cytochrome c release. This Homo sapiens (Human) protein is Glutaredoxin-2, mitochondrial (GLRX2).